The primary structure comprises 325 residues: HTH-type transcriptional regulator VqsM (325 aa).

In terms of domain architecture, HTH araC/xylS-type spans glutamine 226–serine 323. 2 consecutive DNA-binding regions (H-T-H motif) follow at residues valine 243–glycine 264 and valine 290–threonine 313.

Functionally, transcriptional regulator involved in both the repression (at least 99 genes, such as mexR and algU) and in the activation (at least 203 genes, such as mvfR, rsaL, vqsR and rpoS) of regulatory or putative regulatory proteins which are implicated in quorum sensing, virulence and multidrug resistance. The protein is HTH-type transcriptional regulator VqsM (vqsM) of Pseudomonas aeruginosa (strain ATCC 15692 / DSM 22644 / CIP 104116 / JCM 14847 / LMG 12228 / 1C / PRS 101 / PAO1).